The following is a 280-amino-acid chain: Octanoyl-[GcvH]:protein N-octanoyltransferase (280 aa).

Residues 40–245 (QERGAVLRAW…VLSTVSLLQN (206 aa)) form the BPL/LPL catalytic domain. C144 acts as the Acyl-thioester intermediate in catalysis.

This sequence belongs to the octanoyltransferase LipL family.

The catalysed reaction is N(6)-octanoyl-L-lysyl-[glycine-cleavage complex H protein] + L-lysyl-[lipoyl-carrier protein] = N(6)-octanoyl-L-lysyl-[lipoyl-carrier protein] + L-lysyl-[glycine-cleavage complex H protein]. The protein operates within protein modification; protein lipoylation via endogenous pathway; protein N(6)-(lipoyl)lysine from octanoyl-[acyl-carrier-protein]. Catalyzes the amidotransfer (transamidation) of the octanoyl moiety from octanoyl-GcvH to the lipoyl domain of the E2 subunit of lipoate-dependent enzymes. The sequence is that of Octanoyl-[GcvH]:protein N-octanoyltransferase from Exiguobacterium sp. (strain ATCC BAA-1283 / AT1b).